The chain runs to 539 residues: Transcription factor prr1 (539 aa).

The DNA-binding element occupies 7-111 (SSDFVRKLFN…LLDNIKRKAP (105 aa)). A Phosphothreonine modification is found at T221. S223 carries the post-translational modification Phosphoserine. Polar residues predominate over residues 251–263 (GTAQPSLYNTPSS). The disordered stretch occupies residues 251–281 (GTAQPSLYNTPSSDYELANQEKPADSMASAA). Residues 369 to 483 (RILLVEDDEL…TLLQLLKKQL (115 aa)) form the Response regulatory domain. D418 is subject to 4-aspartylphosphate.

It in the N-terminal section; belongs to the HSF family.

The protein resides in the nucleus. Involved in oxidative stress. Transcription factor that acts upon trr1 and ctt1. In Schizosaccharomyces pombe (strain 972 / ATCC 24843) (Fission yeast), this protein is Transcription factor prr1 (prr1).